A 278-amino-acid polypeptide reads, in one-letter code: HTH-type transcriptional activator RhaS (278 aa).

One can recognise an HTH araC/xylS-type domain in the interval 174-272 (NLLLAWLEDH…NWSPRDIRQG (99 aa)). 2 DNA-binding regions (H-T-H motif) span residues 191-212 (DAVA…KQQT) and 239-262 (VTDI…RREF).

In terms of assembly, binds DNA as a dimer.

It is found in the cytoplasm. Functionally, activates expression of the rhaBAD and rhaT operons. The polypeptide is HTH-type transcriptional activator RhaS (Escherichia coli (strain SMS-3-5 / SECEC)).